A 331-amino-acid chain; its full sequence is ADP-L-glycero-D-manno-heptose-6-epimerase (331 aa).

NADP(+)-binding positions include 11–12 (FI), 32–33 (DN), K39, K54, 75–79 (EGACS), and N92. Y139 functions as the Proton acceptor in the catalytic mechanism. Residue K143 participates in NADP(+) binding. A substrate-binding site is contributed by N168. NADP(+) is bound by residues V169 and K177. The active-site Proton acceptor is K177. Substrate contacts are provided by residues R179, H186, 200–203 (FGEY), R213, and Y292.

It belongs to the NAD(P)-dependent epimerase/dehydratase family. HldD subfamily. Homopentamer. NADP(+) serves as cofactor.

It carries out the reaction ADP-D-glycero-beta-D-manno-heptose = ADP-L-glycero-beta-D-manno-heptose. Its pathway is nucleotide-sugar biosynthesis; ADP-L-glycero-beta-D-manno-heptose biosynthesis; ADP-L-glycero-beta-D-manno-heptose from D-glycero-beta-D-manno-heptose 7-phosphate: step 4/4. In terms of biological role, catalyzes the interconversion between ADP-D-glycero-beta-D-manno-heptose and ADP-L-glycero-beta-D-manno-heptose via an epimerization at carbon 6 of the heptose. In Cupriavidus metallidurans (strain ATCC 43123 / DSM 2839 / NBRC 102507 / CH34) (Ralstonia metallidurans), this protein is ADP-L-glycero-D-manno-heptose-6-epimerase.